A 476-amino-acid chain; its full sequence is Trigger factor (476 aa).

The 88-residue stretch at 174-261 (GDIAVVSFKG…LKDLKEKELP (88 aa)) folds into the PPIase FKBP-type domain. The segment at 436–476 (KENTTKTSKTTKNSKTTKATKTTKTTKTTKTSKTQNKKEKK) is disordered. Over residues 440 to 469 (TKTSKTTKNSKTTKATKTTKTTKTTKTSKT) the composition is skewed to low complexity.

It belongs to the FKBP-type PPIase family. Tig subfamily.

It is found in the cytoplasm. It catalyses the reaction [protein]-peptidylproline (omega=180) = [protein]-peptidylproline (omega=0). In terms of biological role, involved in protein export. Acts as a chaperone by maintaining the newly synthesized protein in an open conformation. Functions as a peptidyl-prolyl cis-trans isomerase. This Prochlorococcus marinus (strain MIT 9215) protein is Trigger factor.